The following is a 507-amino-acid chain: Chromosomal replication initiator protein DnaA (507 aa).

Positions 1–112 (MTDDPGSGFT…PATDEADDTT (112 aa)) are domain I, interacts with DnaA modulators. The tract at residues 99-162 (RIAPPATDEA…ERPRNTDSAT (64 aa)) is disordered. Positions 113–127 (VPPSENPATTSPDTT) are enriched in polar residues. Residues 113–166 (VPPSENPATTSPDTTTDNDEIDDSAAARGDNQHSWPSYFTERPRNTDSATAGVT) form a domain II region. Residues 167–383 (SLNRRYTFDT…GALIRVTAFA (217 aa)) form a domain III, AAA+ region region. Residues G211, G213, K214, and T215 each contribute to the ATP site. A domain IV, binds dsDNA region spans residues 384 to 507 (SLNKTPIDKA…TTRIRQRSKR (124 aa)).

It belongs to the DnaA family. As to quaternary structure, oligomerizes as a right-handed, spiral filament on DNA at oriC.

Its subcellular location is the cytoplasm. Plays an essential role in the initiation and regulation of chromosomal replication. ATP-DnaA binds to the origin of replication (oriC) to initiate formation of the DNA replication initiation complex once per cell cycle. Binds the DnaA box (a 9 base pair repeat at the origin) and separates the double-stranded (ds)DNA. Forms a right-handed helical filament on oriC DNA; dsDNA binds to the exterior of the filament while single-stranded (ss)DNA is stabiized in the filament's interior. The ATP-DnaA-oriC complex binds and stabilizes one strand of the AT-rich DNA unwinding element (DUE), permitting loading of DNA polymerase. After initiation quickly degrades to an ADP-DnaA complex that is not apt for DNA replication. Binds acidic phospholipids. The sequence is that of Chromosomal replication initiator protein DnaA from Mycobacterium bovis (strain ATCC BAA-935 / AF2122/97).